Here is a 227-residue protein sequence, read N- to C-terminus: Ornithine decarboxylase antizyme 1 (227 aa).

The protein belongs to the ODC antizyme family. In terms of assembly, interacts with ODC1 and thereby sterically blocks ODC homodimerization. Forms a ternary complex with PSMB4 and OAZ1 before PSMB4 is incorporated into the 20S proteasome. Interacts with AZIN2; this interaction disrupts the interaction between the antizyme and ODC1. Interacts with FAM171A1.

Ornithine decarboxylase (ODC) antizyme protein that negatively regulates ODC activity and intracellular polyamine biosynthesis and uptake in response to increased intracellular polyamine levels. Binds to ODC monomers, inhibiting the assembly of the functional ODC homodimer, and targets the monomers for ubiquitin-independent proteolytic destruction by the 26S proteasome. Triggers ODC degradation by inducing the exposure of a cryptic proteasome-interacting surface of ODC. Stabilizes AZIN2 by interfering with its ubiquitination. Also inhibits cellular uptake of polyamines by inactivating the polyamine uptake transporter. SMAD1/OAZ1/PSMB4 complex mediates the degradation of the CREBBP/EP300 repressor SNIP1. Involved in the translocation of AZIN2 from ER-Golgi intermediate compartment (ERGIC) to the cytosol. This is Ornithine decarboxylase antizyme 1 (Oaz1) from Rattus norvegicus (Rat).